Consider the following 343-residue polypeptide: MLSAASQVLLRSEELLEQGKWLLVNPTDGHVFSALSNPEVYGFHQFFDIYEQSIASAKAQGRDTQHQFVAAYDTDASFDGAVLYLPKAKAHGQMLLANIVACLKPGGTLLVVGENKGGIKSAAKLLTPYSDNVNKIDSARHCAMFAAVVDKPVASFDITKWQDVSEHQVADISFKVCSLPGVFSHGELDTGTQLLLDNIDRVVSGRILDFACGAGIIGCFAGLKNPQAQVVMSDVSALAIYCSQKSAELNGVKAQVIPSNGLGALTGKFAQVFTNPPFHTGIKTDYSVTEGFMQQLKNHLQDRGSLILVANKFLRYADELDKQFKSVQTLTETTKFSVYCCRR.

It belongs to the methyltransferase superfamily. RsmC family. As to quaternary structure, monomer.

It localises to the cytoplasm. It carries out the reaction guanosine(1207) in 16S rRNA + S-adenosyl-L-methionine = N(2)-methylguanosine(1207) in 16S rRNA + S-adenosyl-L-homocysteine + H(+). In terms of biological role, specifically methylates the guanine in position 1207 of 16S rRNA in the 30S particle. This chain is Ribosomal RNA small subunit methyltransferase C, found in Pseudoalteromonas atlantica (strain T6c / ATCC BAA-1087).